Here is a 480-residue protein sequence, read N- to C-terminus: tRNA-2-methylthio-N(6)-dimethylallyladenosine synthase (480 aa).

One can recognise an MTTase N-terminal domain in the interval 32–149 (RKLYIRTFGC…LPELIRRRRA (118 aa)). [4Fe-4S] cluster-binding residues include cysteine 41, cysteine 78, cysteine 112, cysteine 186, cysteine 190, and cysteine 193. In terms of domain architecture, Radical SAM core spans 172–405 (RIEGATAFVS…QALINAQAAA (234 aa)). The region spanning 408–471 (QAMVGTRQRL…PNSLRARVAD (64 aa)) is the TRAM domain.

Belongs to the methylthiotransferase family. MiaB subfamily. In terms of assembly, monomer. It depends on [4Fe-4S] cluster as a cofactor.

It is found in the cytoplasm. It carries out the reaction N(6)-dimethylallyladenosine(37) in tRNA + (sulfur carrier)-SH + AH2 + 2 S-adenosyl-L-methionine = 2-methylsulfanyl-N(6)-dimethylallyladenosine(37) in tRNA + (sulfur carrier)-H + 5'-deoxyadenosine + L-methionine + A + S-adenosyl-L-homocysteine + 2 H(+). Catalyzes the methylthiolation of N6-(dimethylallyl)adenosine (i(6)A), leading to the formation of 2-methylthio-N6-(dimethylallyl)adenosine (ms(2)i(6)A) at position 37 in tRNAs that read codons beginning with uridine. In Bordetella petrii (strain ATCC BAA-461 / DSM 12804 / CCUG 43448), this protein is tRNA-2-methylthio-N(6)-dimethylallyladenosine synthase.